The primary structure comprises 230 residues: UPF0173 metal-dependent hydrolase Mbar_A3716 (230 aa).

This sequence belongs to the UPF0173 family.

This is UPF0173 metal-dependent hydrolase Mbar_A3716 from Methanosarcina barkeri (strain Fusaro / DSM 804).